Consider the following 411-residue polypeptide: Floricaula/leafy-like protein (411 aa).

Residues 220–259 (PDTNYGSEQTKACKKQKRRRSKDSGEDGEERQREHPFIVT) are disordered. The segment covering 231 to 240 (ACKKQKRRRS) has biased composition (basic residues). Positions 241-255 (KDSGEDGEERQREHP) are enriched in basic and acidic residues. 3 DNA-binding regions span residues 252–256 (REHPF), 321–328 (NKPKMRHY), and 392–395 (YVPT).

It belongs to the FLO/LFY family. In terms of tissue distribution, expressed in vegetative buds and male cones but not in female cones, vascular tissue, roots or secondary needles.

Its subcellular location is the nucleus. In terms of biological role, probable transcription factor. The protein is Floricaula/leafy-like protein (FLL) of Pinus radiata (Monterey pine).